The sequence spans 752 residues: uncharacterized protein (752 aa).

2 positions are modified to phosphoserine: Ser202 and Ser582. A disordered region spans residues Glu596 to Leu752. 2 stretches are compositionally biased toward basic and acidic residues: residues Ser601–Leu613 and Leu641–Val677. A compositionally biased stretch (polar residues) spans Asn695–Ser718. Phosphoserine is present on residues Ser707 and Ser738.

This is an uncharacterized protein from Schizosaccharomyces pombe (strain 972 / ATCC 24843) (Fission yeast).